Consider the following 297-residue polypeptide: Thoeris protein ThsA (297 aa).

Helical transmembrane passes span 32–52 (ALSIILTIPTSVSTFISFLDL) and 57–77 (RLIILLILVGLSLVIIIVQFI).

Its subcellular location is the cell membrane. Its activity is regulated as follows. Activated by a signal molecule generated by ThsB. In terms of biological role, probable membrane protein component of the Thoeris antiviral defense system, composed of ThsA and ThsB. Expression of ThsA and ThsB in B.subtilis (strain BEST7003) confers resistance to phages SBSphiC, SBSphiJ and SPO1. Activation by a signal generated by ThsB leads to phage resistance. This chain is Thoeris protein ThsA, found in Bacillus amyloliquefaciens (strain Y2) (Bacillus amyloliquefaciens subsp. plantarum (strain B9601-Y2)).